Consider the following 127-residue polypeptide: Photosystem II reaction center Psb28 protein (127 aa).

A disordered region spans residues 107-127 (GLGYSQNQNSDQTDGDANAEA). The segment covering 109 to 118 (GYSQNQNSDQ) has biased composition (polar residues).

This sequence belongs to the Psb28 family. As to quaternary structure, part of the photosystem II complex.

The protein resides in the cellular thylakoid membrane. This Parasynechococcus marenigrum (strain WH8102) protein is Photosystem II reaction center Psb28 protein.